Reading from the N-terminus, the 356-residue chain is Non-functional pseudokinase ZRK15 (356 aa).

A Protein kinase domain is found at 62 to 356 (NRVSELFDEI…SSSSCGETSL (295 aa)). Residues 68-76 (FDEIPYDWY) and Lys-94 each bind ATP.

This sequence belongs to the protein kinase superfamily. Ser/Thr protein kinase family. ZRK subfamily. As to quaternary structure, interacts with RPP13L4/ZAR1.

This chain is Non-functional pseudokinase ZRK15, found in Arabidopsis thaliana (Mouse-ear cress).